Reading from the N-terminus, the 235-residue chain is Protein CIST1 (235 aa).

The first 31 residues, 1-31 (MASSQPPLPPPPPPLLLLALLLLLKVSDTSS), serve as a signal peptide directing secretion. 2 stretches are compositionally biased toward low complexity: residues 28 to 61 (DTSS…SSPT) and 76 to 110 (STSH…SQPE). The disordered stretch occupies residues 28-159 (DTSSSVSTAT…TGPPSVSLAT (132 aa)). At 32-184 (SVSTATSTAS…GVPRLHRNPG (153 aa)) the chain is on the extracellular side. An N-linked (GlcNAc...) asparagine glycan is attached at Asn-45. A compositionally biased stretch (polar residues) spans 114 to 136 (HPSSGSPSSEHTVTSPSLGSVSL). Residues 185 to 205 (VVVAVCLLVSALLIGGAIMAV) form a helical membrane-spanning segment. The Cytoplasmic segment spans residues 206-235 (RRCHNGVSEFQKLDEGLVSRRSSSAHHTLP).

In terms of tissue distribution, highly expressed in large intestine, small intestine, rumen, and kidney tissues.

The protein resides in the membrane. The sequence is that of Protein CIST1 (CIST1) from Bos taurus (Bovine).